A 126-amino-acid chain; its full sequence is Ribosome-binding factor A (126 aa).

This sequence belongs to the RbfA family. In terms of assembly, monomer. Binds 30S ribosomal subunits, but not 50S ribosomal subunits or 70S ribosomes.

The protein localises to the cytoplasm. One of several proteins that assist in the late maturation steps of the functional core of the 30S ribosomal subunit. Associates with free 30S ribosomal subunits (but not with 30S subunits that are part of 70S ribosomes or polysomes). Required for efficient processing of 16S rRNA. May interact with the 5'-terminal helix region of 16S rRNA. The sequence is that of Ribosome-binding factor A from Azoarcus sp. (strain BH72).